Here is a 1898-residue protein sequence, read N- to C-terminus: Receptor-type tyrosine-protein phosphatase F (1898 aa).

The first 29 residues, 1 to 29, serve as a signal peptide directing secretion; the sequence is MAPEPAPGRRMVPLVPALVMLGLMAGAHG. The Extracellular segment spans residues 30–1254; that stretch reads DSKPVFVKVP…QQQEEPEMLW (1225 aa). Ig-like C2-type domains lie at 33–123, 135–224, and 232–314; these read PVFV…AKLS, PTID…ANLY, and PRFS…AQVT. Cysteines 54 and 107 form a disulfide. 68–77 serves as a coordination point for heparin; it reads KKGKKVSSQR. A glycan (N-linked (GlcNAc...) asparagine) is linked at asparagine 117. An intrachain disulfide couples cysteine 156 to cysteine 207. Asparagine 250 and asparagine 295 each carry an N-linked (GlcNAc...) asparagine glycan. Cysteines 253 and 298 form a disulfide. Fibronectin type-III domains are found at residues 321–411, 416–510, 514–604, 609–706, 711–810, 811–905, 909–1001, and 1005–1089; these read PPID…TGEQ, PPRR…TQQG, QPAD…TAQS, PPQK…TDED, PPRK…TTGA, VPGR…PEDA, FPQN…TMPM, and FAKN…TAPD. Residues 693–713 are disordered; the sequence is GPESSPVLVRTDEDVPSGPPR. Asparagine 721 carries N-linked (GlcNAc...) asparagine glycosylation. N-linked (GlcNAc...) asparagine glycans are attached at residues asparagine 941 and asparagine 957. The chain crosses the membrane as a helical span at residues 1255 to 1275; sequence VTGPVLAVILIILIVIAILLF. Residues 1276-1898 lie on the Cytoplasmic side of the membrane; it reads KRKRTHSPSS…YLGSFDHYAT (623 aa). Serine 1296 is subject to Phosphoserine. 2 consecutive Tyrosine-protein phosphatase domains span residues 1343-1598 and 1630-1889; these read FSQE…LLEA and MELE…ALEY. Residues aspartate 1507, 1539–1545, and glutamine 1583 contribute to the substrate site; that span reads CSAGVGR. Cysteine 1539 (phosphocysteine intermediate) is an active-site residue. The active-site Phosphocysteine intermediate is cysteine 1830.

It belongs to the protein-tyrosine phosphatase family. Receptor class 2A subfamily. As to quaternary structure, interacts with GRIP1. Interacts with PPFIA1, PPFIA2 and PPFIA3. Interacts with PTPRF.

It localises to the membrane. The enzyme catalyses O-phospho-L-tyrosyl-[protein] + H2O = L-tyrosyl-[protein] + phosphate. Its function is as follows. Possible cell adhesion receptor. It possesses an intrinsic protein tyrosine phosphatase activity (PTPase) and dephosphorylates EPHA2 regulating its activity. Functionally, the first PTPase domain has enzymatic activity, while the second one seems to affect the substrate specificity of the first one. This chain is Receptor-type tyrosine-protein phosphatase F (Ptprf), found in Rattus norvegicus (Rat).